The sequence spans 143 residues: Hemoglobin subunit alpha (143 aa).

The region spanning 2-143 is the Globin domain; it reads TLSDKDKSTV…VALALAERYR (142 aa). O2 is bound at residue His-60. His-89 contacts heme b.

It belongs to the globin family. As to quaternary structure, heterotetramer of two alpha chains and two beta chains. As to expression, red blood cells.

In terms of biological role, involved in oxygen transport from gills to the various peripheral tissues. The sequence is that of Hemoglobin subunit alpha (hba) from Thunnus thynnus (Atlantic bluefin tuna).